Here is a 147-residue protein sequence, read N- to C-terminus: Hemoglobin subunit epsilon (147 aa).

The 145-residue stretch at 3-147 (HFTAEEKATI…VATALAHKYH (145 aa)) folds into the Globin domain. 2 positions are modified to phosphoserine: S14 and S51. Heme b is bound by residues H64 and H93.

The protein belongs to the globin family. Heterotetramer of two alpha chains and two epsilon chains in early embryonic hemoglobin Gower-2; two zeta chains and two epsilon chains in early embryonic hemoglobin Gower-1. In terms of tissue distribution, red blood cells.

Functionally, the epsilon chain is a beta-type chain of early mammalian embryonic hemoglobin. In Daubentonia madagascariensis (Aye-aye), this protein is Hemoglobin subunit epsilon (HBE1).